The sequence spans 286 residues: Shikimate dehydrogenase (NADP(+)) (286 aa).

Residues 22–24 (SRS) and threonine 71 each bind shikimate. Catalysis depends on lysine 75, which acts as the Proton acceptor. Residue glutamate 87 coordinates NADP(+). Shikimate contacts are provided by asparagine 96 and aspartate 111. Residues 136-140 (GAGGA), 160-165 (NRTAAR), and isoleucine 225 each bind NADP(+). Tyrosine 227 provides a ligand contact to shikimate. An NADP(+)-binding site is contributed by glycine 248.

It belongs to the shikimate dehydrogenase family. As to quaternary structure, homodimer.

The enzyme catalyses shikimate + NADP(+) = 3-dehydroshikimate + NADPH + H(+). It participates in metabolic intermediate biosynthesis; chorismate biosynthesis; chorismate from D-erythrose 4-phosphate and phosphoenolpyruvate: step 4/7. Functionally, involved in the biosynthesis of the chorismate, which leads to the biosynthesis of aromatic amino acids. Catalyzes the reversible NADPH linked reduction of 3-dehydroshikimate (DHSA) to yield shikimate (SA). The chain is Shikimate dehydrogenase (NADP(+)) from Sinorhizobium fredii (strain NBRC 101917 / NGR234).